Reading from the N-terminus, the 203-residue chain is Inosine triphosphate pyrophosphatase (203 aa).

Position 10-15 (10-15) interacts with ITP; it reads TGNQNK. Position 40 (Glu40) interacts with Mg(2+). Residues Lys52, 68–69, Lys85, 145–148, Lys168, and 173–174 contribute to the ITP site; these read DT, FGWD, and HR.

Belongs to the HAM1 NTPase family. Homodimer. Requires Mg(2+) as cofactor. It depends on Mn(2+) as a cofactor.

The protein localises to the cytoplasm. The enzyme catalyses ITP + H2O = IMP + diphosphate + H(+). The catalysed reaction is dITP + H2O = dIMP + diphosphate + H(+). It catalyses the reaction XTP + H2O = XMP + diphosphate + H(+). In terms of biological role, pyrophosphatase that hydrolyzes non-canonical purine nucleotides such as inosine triphosphate (ITP), deoxyinosine triphosphate (dITP) or xanthosine 5'-triphosphate (XTP) to their respective monophosphate derivatives. The enzyme does not distinguish between the deoxy- and ribose forms. Probably excludes non-canonical purines from RNA and DNA precursor pools, thus preventing their incorporation into RNA and DNA and avoiding chromosomal lesions. This chain is Inosine triphosphate pyrophosphatase, found in Nematostella vectensis (Starlet sea anemone).